A 323-amino-acid chain; its full sequence is tRNA uridine(34) hydroxylase (323 aa).

Residues 127–221 (QDENTVVLDA…YGQDPEVQGD (95 aa)) enclose the Rhodanese domain. The active-site Cysteine persulfide intermediate is Cys-181.

The protein belongs to the TrhO family.

The catalysed reaction is uridine(34) in tRNA + AH2 + O2 = 5-hydroxyuridine(34) in tRNA + A + H2O. Functionally, catalyzes oxygen-dependent 5-hydroxyuridine (ho5U) modification at position 34 in tRNAs. The sequence is that of tRNA uridine(34) hydroxylase from Oceanobacillus iheyensis (strain DSM 14371 / CIP 107618 / JCM 11309 / KCTC 3954 / HTE831).